We begin with the raw amino-acid sequence, 289 residues long: MSWMTDYVRPKLRGLLQRDVPDNLWTNCESCGQMMLTKELERSEKVCPHCGHHMRATAKERLGWTFDGGEYTTIELPKMPVDPLGFKDSKRYTDRLKDARHKSHLDEALVVAHGMIKGQKAVVAVMAPEFLLGTMGAALGEAFVAACRLAVLQKAPLVVYTASGGARMQEGVVSLMQMPRTTIGVQMLQEAGLPYVVVFTNPTTGGVSASFAMLGDVHIAEPNALIAFAGPRVIQDTVREKLPEGFQRSEYLREHGMVDIVAKRSELPELLGRILGIMMRQKTVSDAAA.

In terms of domain architecture, CoA carboxyltransferase N-terminal spans 24-289 (LWTNCESCGQ…RQKTVSDAAA (266 aa)). The Zn(2+) site is built by Cys-28, Cys-31, Cys-47, and Cys-50. Residues 28 to 50 (CESCGQMMLTKELERSEKVCPHC) form a C4-type zinc finger.

Belongs to the AccD/PCCB family. Acetyl-CoA carboxylase is a heterohexamer composed of biotin carboxyl carrier protein (AccB), biotin carboxylase (AccC) and two subunits each of ACCase subunit alpha (AccA) and ACCase subunit beta (AccD). The cofactor is Zn(2+).

It is found in the cytoplasm. The enzyme catalyses N(6)-carboxybiotinyl-L-lysyl-[protein] + acetyl-CoA = N(6)-biotinyl-L-lysyl-[protein] + malonyl-CoA. The protein operates within lipid metabolism; malonyl-CoA biosynthesis; malonyl-CoA from acetyl-CoA: step 1/1. Component of the acetyl coenzyme A carboxylase (ACC) complex. Biotin carboxylase (BC) catalyzes the carboxylation of biotin on its carrier protein (BCCP) and then the CO(2) group is transferred by the transcarboxylase to acetyl-CoA to form malonyl-CoA. The chain is Acetyl-coenzyme A carboxylase carboxyl transferase subunit beta from Gluconobacter oxydans (strain 621H) (Gluconobacter suboxydans).